The chain runs to 97 residues: Co-chaperonin GroES (97 aa).

Belongs to the GroES chaperonin family. In terms of assembly, heptamer of 7 subunits arranged in a ring. Interacts with the chaperonin GroEL.

It localises to the cytoplasm. Functionally, together with the chaperonin GroEL, plays an essential role in assisting protein folding. The GroEL-GroES system forms a nano-cage that allows encapsulation of the non-native substrate proteins and provides a physical environment optimized to promote and accelerate protein folding. GroES binds to the apical surface of the GroEL ring, thereby capping the opening of the GroEL channel. In Pseudomonas fluorescens (strain Pf0-1), this protein is Co-chaperonin GroES.